The chain runs to 129 residues: Replication initiation control protein YabA (129 aa).

Zn(2+)-binding residues include histidine 103, cysteine 105, cysteine 119, and cysteine 122.

Belongs to the YabA family. In terms of assembly, homotetramer. Interacts with both DnaA and DnaN, acting as a bridge between these two proteins. Zn(2+) serves as cofactor.

The protein localises to the cytoplasm. It is found in the nucleoid. In terms of biological role, involved in control of chromosome replication initiation. Inhibits the cooperative binding of DnaA to the oriC region, thus negatively regulating initiation of chromosome replication. Inhibits the ability of DnaA-ATP to form a helix on DNA; does not disassemble preformed DnaA-DNA helices. Decreases the residence time of DnaA on the chromosome at its binding sites (oriC, replication forks and promoter-binding sites). Tethers DnaA to the replication machinery via the DNA polymerase beta sliding clamp subunit (dnaN). Associates with oriC and other DnaA targets on the chromosome in a DnaA-dependent manner. In Listeria innocua serovar 6a (strain ATCC BAA-680 / CLIP 11262), this protein is Replication initiation control protein YabA.